The sequence spans 139 residues: MQDPRHPQGLPLSPGLPKRQRQDRTIYNWKQQEVLENHFKEEQYPDYDTRQELAEMLNLREYQVQVWFKNRRAKRSRERWFQKQLQQLQKHPQQQHPQQQHPQQQLQQQQPQQQPQQQQPQQQPQQQQPQQQQLHQQPQ.

2 disordered regions span residues 1 to 22 and 78 to 139; these read MQDPRHPQGLPLSPGLPKRQRQ and ERWF…QQPQ. Positions 20-79 form a DNA-binding region, homeobox; that stretch reads QRQDRTIYNWKQQEVLENHFKEEQYPDYDTRQELAEMLNLREYQVQVWFKNRRAKRSRER. A compositionally biased stretch (low complexity) spans 82-139; it reads QKQLQQLQKHPQQQHPQQQHPQQQLQQQQPQQQPQQQQPQQQPQQQQPQQQQLHQQPQ.

The protein belongs to the paired homeobox family.

It is found in the nucleus. Functionally, transcription factor required for zygotic genome activation (ZGA), a critical event in early embryonic development during which the developmental control passes from maternally provided mRNAs to the expression of the zygotic genome after fertilization. Protein produced from maternal transcripts that binds and activates expression of key ZGA marker genes, such as NANOGNB, ZSCAN4, DUXB, KLF5 and DPPA3. Binds to regulatory DNA sequences containing a 5'-TAATCC-3' sequence motif. The polypeptide is Tetra-peptide repeat homeobox-like protein (Homo sapiens (Human)).